The sequence spans 974 residues: RING finger protein nhl-1 (974 aa).

The interval 1-29 (MSSSPQNEAEAREKMRELMSRPPSSRPAD) is disordered. The segment covering 9-19 (AEAREKMRELM) has biased composition (basic and acidic residues). An RING-type zinc finger spans residues 43 to 84 (CPICLDRYKQPKLLPCQHTFCYPCLESCADTLHRNLKCPECR). 2 disordered regions span residues 360–395 (VKSD…IRYR) and 416–548 (SLLT…DFPV). Residues 416–431 (SLLTTSVTADSSSRTS) are compositionally biased toward polar residues. Basic and acidic residues predominate over residues 437–446 (RVTRSVEPTK). A compositionally biased stretch (polar residues) spans 447-465 (SRPTSLIVPNTETPRTVSP). Residues 488–501 (APLPQLPIRKPPLP) are compositionally biased toward pro residues. The segment covering 511-528 (LNEKVETIRRAHQQRQDA) has biased composition (basic and acidic residues). Residues 529–538 (SRAASRAVSS) are compositionally biased toward low complexity. NHL repeat units lie at residues 699–742 (RAVF…FDKD), 746–788 (VRQF…FGLE), 792–835 (LFSF…FDKN), 839–883 (IAKF…FDPH), 887–930 (LFSF…FDAQ), and 934–974 (VSSF…IQIF).

Interacts with ubc-13.

This Caenorhabditis elegans protein is RING finger protein nhl-1.